The sequence spans 160 residues: Transcriptional regulator MraZ (160 aa).

SpoVT-AbrB domains follow at residues 5–50 and 93–136; these read KFET…EGVY and AIEC…SQAE.

It belongs to the MraZ family. In terms of assembly, forms oligomers.

It localises to the cytoplasm. The protein resides in the nucleoid. The sequence is that of Transcriptional regulator MraZ from Geotalea uraniireducens (strain Rf4) (Geobacter uraniireducens).